Reading from the N-terminus, the 231-residue chain is Large ribosomal subunit protein uL1 (231 aa).

Belongs to the universal ribosomal protein uL1 family. As to quaternary structure, part of the 50S ribosomal subunit.

Its function is as follows. Binds directly to 23S rRNA. The L1 stalk is quite mobile in the ribosome, and is involved in E site tRNA release. In terms of biological role, protein L1 is also a translational repressor protein, it controls the translation of the L11 operon by binding to its mRNA. The sequence is that of Large ribosomal subunit protein uL1 from Teredinibacter turnerae (strain ATCC 39867 / T7901).